Reading from the N-terminus, the 713-residue chain is Phosphoribosylformylglycinamidine synthase subunit PurL (713 aa).

Residues 1–17 (MSLSPSDRELVTEELGR) show a composition bias toward basic and acidic residues. The segment at 1–20 (MSLSPSDRELVTEELGREPT) is disordered. His-34 is a catalytic residue. Tyr-37 lines the ATP pocket. Mg(2+) is bound at residue Glu-85. Residues 86–89 (SHNH) and Arg-108 each bind substrate. Residue His-87 is the Proton acceptor of the active site. Asp-109 is a binding site for Mg(2+). Residue Gln-233 participates in substrate binding. Asp-261 lines the Mg(2+) pocket. 305–307 (ESQ) serves as a coordination point for substrate. Asp-480 and Gly-517 together coordinate ATP. Residue Asn-518 coordinates Mg(2+). Position 520 (Ser-520) interacts with substrate.

The protein belongs to the FGAMS family. In terms of assembly, monomer. Part of the FGAM synthase complex composed of 1 PurL, 1 PurQ and 2 PurS subunits.

Its subcellular location is the cytoplasm. The enzyme catalyses N(2)-formyl-N(1)-(5-phospho-beta-D-ribosyl)glycinamide + L-glutamine + ATP + H2O = 2-formamido-N(1)-(5-O-phospho-beta-D-ribosyl)acetamidine + L-glutamate + ADP + phosphate + H(+). Its pathway is purine metabolism; IMP biosynthesis via de novo pathway; 5-amino-1-(5-phospho-D-ribosyl)imidazole from N(2)-formyl-N(1)-(5-phospho-D-ribosyl)glycinamide: step 1/2. In terms of biological role, part of the phosphoribosylformylglycinamidine synthase complex involved in the purines biosynthetic pathway. Catalyzes the ATP-dependent conversion of formylglycinamide ribonucleotide (FGAR) and glutamine to yield formylglycinamidine ribonucleotide (FGAM) and glutamate. The FGAM synthase complex is composed of three subunits. PurQ produces an ammonia molecule by converting glutamine to glutamate. PurL transfers the ammonia molecule to FGAR to form FGAM in an ATP-dependent manner. PurS interacts with PurQ and PurL and is thought to assist in the transfer of the ammonia molecule from PurQ to PurL. This is Phosphoribosylformylglycinamidine synthase subunit PurL from Natronomonas pharaonis (strain ATCC 35678 / DSM 2160 / CIP 103997 / JCM 8858 / NBRC 14720 / NCIMB 2260 / Gabara) (Halobacterium pharaonis).